Consider the following 336-residue polypeptide: Phosphate acyltransferase (336 aa).

The protein belongs to the PlsX family. In terms of assembly, homodimer. Probably interacts with PlsY.

The protein resides in the cytoplasm. It carries out the reaction a fatty acyl-[ACP] + phosphate = an acyl phosphate + holo-[ACP]. It participates in lipid metabolism; phospholipid metabolism. Functionally, catalyzes the reversible formation of acyl-phosphate (acyl-PO(4)) from acyl-[acyl-carrier-protein] (acyl-ACP). This enzyme utilizes acyl-ACP as fatty acyl donor, but not acyl-CoA. This is Phosphate acyltransferase from Pseudomonas fluorescens (strain ATCC BAA-477 / NRRL B-23932 / Pf-5).